Here is a 330-residue protein sequence, read N- to C-terminus: WRKY transcription factor WRKY51 (330 aa).

The disordered stretch occupies residues 39-61 (QTGTSERSPAPAPAQEQQQQQQV). Residues 51-60 (PAQEQQQQQQ) show a composition bias toward low complexity. A Nuclear localization signal motif is present at residues 74–81 (FKKVISML). Disordered stretches follow at residues 91–117 (RGPV…SAVS) and 302–330 (YEGE…LPLA). Over residues 101 to 117 (PAASEPAPVRSSPSAVS) the composition is skewed to low complexity. Residues 245–311 (KVADIPADDF…YEGEHRHTPS (67 aa)) constitute a DNA-binding region (WRKY). Positions 318 to 330 (PPAPPPPLALPLA) are enriched in pro residues.

It belongs to the WRKY group II-a family. Highly expressed in aleurone cells. In seeds, predominantly present in the plumule, radicle and scutellum of the embryo.

It localises to the nucleus. In terms of biological role, transcription factor. Interacts, when in complex with WRKY71, specifically with the W box (5'-(T)TGAC[CT]-3'), a frequently occurring elicitor-responsive cis-acting element. Represses specifically gibberellic acid (GA)-induced promoters in aleurone cells, probably by interfering with GAM1. This Oryza sativa subsp. indica (Rice) protein is WRKY transcription factor WRKY51.